The following is a 339-amino-acid chain: Phosphate acyltransferase (339 aa).

The protein belongs to the PlsX family. In terms of assembly, homodimer. Probably interacts with PlsY.

It localises to the cytoplasm. The catalysed reaction is a fatty acyl-[ACP] + phosphate = an acyl phosphate + holo-[ACP]. Its pathway is lipid metabolism; phospholipid metabolism. In terms of biological role, catalyzes the reversible formation of acyl-phosphate (acyl-PO(4)) from acyl-[acyl-carrier-protein] (acyl-ACP). This enzyme utilizes acyl-ACP as fatty acyl donor, but not acyl-CoA. The protein is Phosphate acyltransferase of Aeromonas salmonicida (strain A449).